The sequence spans 397 residues: DNA replication and repair protein RecF (397 aa).

30-37 (GPNGQGKT) lines the ATP pocket.

The protein belongs to the RecF family.

It localises to the cytoplasm. In terms of biological role, the RecF protein is involved in DNA metabolism; it is required for DNA replication and normal SOS inducibility. RecF binds preferentially to single-stranded, linear DNA. It also seems to bind ATP. In Beutenbergia cavernae (strain ATCC BAA-8 / DSM 12333 / CCUG 43141 / JCM 11478 / NBRC 16432 / NCIMB 13614 / HKI 0122), this protein is DNA replication and repair protein RecF.